The following is a 126-amino-acid chain: Glycine cleavage system H protein (126 aa).

Residues Thr22–Glu104 enclose the Lipoyl-binding domain. Lys63 bears the N6-lipoyllysine mark.

The protein belongs to the GcvH family. In terms of assembly, the glycine cleavage system is composed of four proteins: P, T, L and H. It depends on (R)-lipoate as a cofactor.

In terms of biological role, the glycine cleavage system catalyzes the degradation of glycine. The H protein shuttles the methylamine group of glycine from the P protein to the T protein. Functionally, is also involved in protein lipoylation via its role as an octanoyl/lipoyl carrier protein intermediate. The sequence is that of Glycine cleavage system H protein from Staphylococcus saprophyticus subsp. saprophyticus (strain ATCC 15305 / DSM 20229 / NCIMB 8711 / NCTC 7292 / S-41).